The sequence spans 248 residues: Ribonuclease 3 (248 aa).

Residues 15 to 142 (LKAFFKQYHV…MIAALYLDLG (128 aa)) enclose the RNase III domain. Residue glutamate 55 participates in Mg(2+) binding. Residue aspartate 59 is part of the active site. Positions 128 and 131 each coordinate Mg(2+). The active site involves glutamate 131. Residues 169–240 (DYKTELQEFL…ARDALQKLAT (72 aa)) form the DRBM domain.

Belongs to the ribonuclease III family. As to quaternary structure, homodimer. It depends on Mg(2+) as a cofactor.

The protein localises to the cytoplasm. The catalysed reaction is Endonucleolytic cleavage to 5'-phosphomonoester.. Functionally, digests double-stranded RNA. Involved in the processing of primary rRNA transcript to yield the immediate precursors to the large and small rRNAs (23S and 16S). Processes some mRNAs, and tRNAs when they are encoded in the rRNA operon. Processes pre-crRNA and tracrRNA of type II CRISPR loci if present in the organism. The sequence is that of Ribonuclease 3 from Spiroplasma citri.